A 62-amino-acid polypeptide reads, in one-letter code: MTIAFQLAVFALIAISFILLISVPVVFASPEGWSNNKNVVFSGTSLWIGLVFLVGILNSLIS.

The next 2 membrane-spanning stretches (helical) occupy residues 8–28 (AVFA…VVFA) and 41–61 (FSGT…NSLI).

The protein belongs to the PsbZ family. PSII is composed of 1 copy each of membrane proteins PsbA, PsbB, PsbC, PsbD, PsbE, PsbF, PsbH, PsbI, PsbJ, PsbK, PsbL, PsbM, PsbT, PsbY, PsbZ, Psb30/Ycf12, at least 3 peripheral proteins of the oxygen-evolving complex and a large number of cofactors. It forms dimeric complexes.

Its subcellular location is the plastid. It is found in the chloroplast thylakoid membrane. In terms of biological role, may control the interaction of photosystem II (PSII) cores with the light-harvesting antenna, regulates electron flow through the 2 photosystem reaction centers. PSII is a light-driven water plastoquinone oxidoreductase, using light energy to abstract electrons from H(2)O, generating a proton gradient subsequently used for ATP formation. This Glycine max (Soybean) protein is Photosystem II reaction center protein Z.